A 395-amino-acid polypeptide reads, in one-letter code: MAKEKYDRSKPHLNIGTIGHVDHGKTTLTAAITKVMADAGYSEASAFDQIDNAPEEKERGITINSSHVEYSTEKRHYAHVDCPGHADYVKNMVTGAAQMDGAILVVAATDGPMPQTREHILLGRQVGIPRIVVFLNKVDLVDDEELLELVEMEVRDLLSFYEYDGDNGPVISGSALGALEGDEKWSKTVLELMEAVDTWIELPERDVDKAFLMPIEDVFSITGRGTVATGRIETGVANTGDPIEIIGMGAGKLTSTITGVEMFRKILDRGEAGDNVGILLRGIEKSQISRGMVITKPGSVTPHAKFKAEVYILKKEEGGRHTPFHNNYRPQFYVRTTDVTGTISLPDGVEMVMPGDNLTITVELIQAIAMNQGLRFAIREGGRTVGAGQVTEILD.

A tr-type G domain is found at 10–204; that stretch reads KPHLNIGTIG…AVDTWIELPE (195 aa). The interval 19–26 is G1; it reads GHVDHGKT. 19–26 contacts GTP; sequence GHVDHGKT. T26 lines the Mg(2+) pocket. Residues 60–64 are G2; the sequence is GITIN. Residues 81-84 form a G3 region; sequence DCPG. Residues 81 to 85 and 136 to 139 each bind GTP; these read DCPGH and NKVD. The segment at 136 to 139 is G4; it reads NKVD. Positions 174 to 176 are G5; the sequence is SAL.

This sequence belongs to the TRAFAC class translation factor GTPase superfamily. Classic translation factor GTPase family. EF-Tu/EF-1A subfamily. As to quaternary structure, monomer.

It localises to the cytoplasm. The enzyme catalyses GTP + H2O = GDP + phosphate + H(+). In terms of biological role, GTP hydrolase that promotes the GTP-dependent binding of aminoacyl-tRNA to the A-site of ribosomes during protein biosynthesis. In Christiangramia forsetii (strain DSM 17595 / CGMCC 1.15422 / KT0803) (Gramella forsetii), this protein is Elongation factor Tu.